Here is a 153-residue protein sequence, read N- to C-terminus: Agglutinin (153 aa).

Residues 22 to 25 (NAWE) and Asn-46 contribute to the beta-D-galactosyl-(1-&gt;3)-N-acetyl-D-galactosamine site. The region spanning 58-153 (GDSAEYLIIN…DNQKWYFDAK (96 aa)) is the Ricin B-type lectin domain.

In terms of assembly, homodimer.

Functionally, lectin that primarily recognizes glycans with a non-reducing terminal N-acetylgalactosamine (GalNAc), with a preference for the alpha- over the beta-anomer. Can also bind non-reducing terminal galactose (Gal) residues but with a lower affinity. Strongly interacts with glycolipid type glycans with terminal non-reducing Gal or GalNAc but fails to bind sialylated or fucosylated forms of the same glycans. Strongly interacts with galactosylated N-glycans, displaying highest affinity for alpha-1-3 branched mono-antennary N-glycans but also binding to multi-antennary glycans. The sequence is that of Agglutinin from Sclerotinia sclerotiorum (strain ATCC 18683 / 1980 / Ss-1) (White mold).